Reading from the N-terminus, the 37-residue chain is Diuretic hormone 1 (37 aa).

The protein belongs to the sauvagine/corticotropin-releasing factor/urotensin I family.

The protein resides in the secreted. Functionally, stimulates fluid secretion by the Malpighian tubules. Increases cyclic AMP production. The sequence is that of Diuretic hormone 1 from Tenebrio molitor (Yellow mealworm beetle).